Consider the following 120-residue polypeptide: MMTPKNLFERRKRRARQSIKKKGNGRIRLSVFRSGKNIYVQVIDDLNGVTLAAASTLDKELKGNLKTGADKEAAAAVGKLIAERAKAAGITEVVFDRGGYIYHGRVKALADAAREGGLSF.

The protein belongs to the universal ribosomal protein uL18 family. Part of the 50S ribosomal subunit; part of the 5S rRNA/L5/L18/L25 subcomplex. Contacts the 5S and 23S rRNAs.

Its function is as follows. This is one of the proteins that bind and probably mediate the attachment of the 5S RNA into the large ribosomal subunit, where it forms part of the central protuberance. The chain is Large ribosomal subunit protein uL18 from Paramagnetospirillum magneticum (strain ATCC 700264 / AMB-1) (Magnetospirillum magneticum).